Reading from the N-terminus, the 663-residue chain is DNA ligase (663 aa).

NAD(+) contacts are provided by residues 31 to 35 (DFEYD), 80 to 81 (SL), and Glu-110. The N6-AMP-lysine intermediate role is filled by Lys-112. Residues Arg-133, Glu-168, Lys-284, and Lys-308 each contribute to the NAD(+) site. Positions 402, 405, 420, and 425 each coordinate Zn(2+). The BRCT domain occupies 586 to 663 (IKDNRFEGKT…DEDKFRKMIE (78 aa)).

The protein belongs to the NAD-dependent DNA ligase family. LigA subfamily. It depends on Mg(2+) as a cofactor. The cofactor is Mn(2+).

It catalyses the reaction NAD(+) + (deoxyribonucleotide)n-3'-hydroxyl + 5'-phospho-(deoxyribonucleotide)m = (deoxyribonucleotide)n+m + AMP + beta-nicotinamide D-nucleotide.. Functionally, DNA ligase that catalyzes the formation of phosphodiester linkages between 5'-phosphoryl and 3'-hydroxyl groups in double-stranded DNA using NAD as a coenzyme and as the energy source for the reaction. It is essential for DNA replication and repair of damaged DNA. The chain is DNA ligase from Acetivibrio thermocellus (strain ATCC 27405 / DSM 1237 / JCM 9322 / NBRC 103400 / NCIMB 10682 / NRRL B-4536 / VPI 7372) (Clostridium thermocellum).